An 88-amino-acid chain; its full sequence is Small ribosomal subunit protein uS17 (88 aa).

Belongs to the universal ribosomal protein uS17 family. As to quaternary structure, part of the 30S ribosomal subunit.

Functionally, one of the primary rRNA binding proteins, it binds specifically to the 5'-end of 16S ribosomal RNA. In Saccharophagus degradans (strain 2-40 / ATCC 43961 / DSM 17024), this protein is Small ribosomal subunit protein uS17.